Consider the following 529-residue polypeptide: Snake venom 5'-nucleotidase (529 aa).

Glycine 1 is a signal peptide. Positions 12 and 14 each coordinate Zn(2+). Cysteine 27 and cysteine 32 are disulfide-bonded. Zn(2+)-binding residues include aspartate 60, asparagine 92, histidine 195, and histidine 218. Residues asparagine 308 and asparagine 322 are each glycosylated (N-linked (GlcNAc...) asparagine). Cystine bridges form between cysteine 328/cysteine 333 and cysteine 340/cysteine 362. An AMP-binding site is contributed by arginine 329. The AMP site is built by asparagine 365, arginine 370, and phenylalanine 393. Residues cysteine 452 and cysteine 455 are joined by a disulfide bond. Residues phenylalanine 476 and aspartate 482 each coordinate AMP. A lipid anchor (GPI-anchor amidated serine) is attached at serine 525. Positions 526-529 (AGSL) are cleaved as a propeptide — removed in mature form.

This sequence belongs to the 5'-nucleotidase family. Zn(2+) serves as cofactor. Post-translationally, venom 5'-nucleotidases (or a part thereof) may be released into the venom via exosome-like vesicles. They may be attached via a GPI anchor to the membrane of these vesicles. Soluble forms of 5'-nucleotidase might be released by cleavage of the ectodomain in the exosome-like vesicles or venom gland cells. As to expression, expressed by the venom gland.

The protein resides in the membrane. The catalysed reaction is a ribonucleoside 5'-phosphate + H2O = a ribonucleoside + phosphate. Functionally, hydrolyzes nucleotides into nucleosides. Snake venom 5'-nucleotidases are widely distributed among venomous snake taxa, but there is a lack of information about their biological activities. They have been shown to inhibit platelet aggregation. This effect may be due to the liberation of inhibitory AMP or adenosine by its action on ADP released upon initiation of aggregation. Venom 5'-nucleotidases are also known to synergistically act in vivo with other toxins like ADPases, phospholipases, and disintegrins to exert a more pronounced anti-coagulant effect. This Naja atra (Chinese cobra) protein is Snake venom 5'-nucleotidase.